Reading from the N-terminus, the 261-residue chain is tRNA pseudouridine synthase A (261 aa).

The active-site Nucleophile is Asp-51. A substrate-binding site is contributed by Tyr-109.

It belongs to the tRNA pseudouridine synthase TruA family. In terms of assembly, homodimer.

The catalysed reaction is uridine(38/39/40) in tRNA = pseudouridine(38/39/40) in tRNA. Its function is as follows. Formation of pseudouridine at positions 38, 39 and 40 in the anticodon stem and loop of transfer RNAs. This Shewanella pealeana (strain ATCC 700345 / ANG-SQ1) protein is tRNA pseudouridine synthase A.